The sequence spans 154 residues: Transcriptional repressor NrdR (154 aa).

Residues 3-34 (CPFCGHAATQVIDTRMSEEGDTVRRRRRCESC) fold into a zinc finger. Positions 49–139 (PAVVKKNGSR…VYRSFEDLAE (91 aa)) constitute an ATP-cone domain.

It belongs to the NrdR family. It depends on Zn(2+) as a cofactor.

Negatively regulates transcription of bacterial ribonucleotide reductase nrd genes and operons by binding to NrdR-boxes. The protein is Transcriptional repressor NrdR of Ralstonia pickettii (strain 12J).